Consider the following 473-residue polypeptide: MSLLVVGVSHRGTPLSLLERAVLDSDQATKLLDDLVGSPVVREGMVLSTCNRVEIYACVEKFHPALTLISELLSRHGNVNFDEIAGHVHVHYDDRAVQHLFAVAAGLDSMLIGEHQVVGQVRDAFRLAQERGYAGRDLHAIVQDALHAARRVRAETRIDSAGQTLVDVGLQILSERLGPLAGRRALVIGAGAMASVAVAALTRVGITGLTVASRTLRRATALAQRYNGQAAALEKLADLLAETDVVVSCTGSVHPVVDAATLTKAVAGRTNPLGILDIALPHDVDPDVDRLPNVIRVDLETLRPVLENTASSADVRHARHILDEEFDAHVARRAAVGVVPTVVALRDKAARVVAAELRRLEKRLPELDPRQFEEIRTTVHRVVDKLLHAPTVRVQELAGLAGPDSYSEALRTLFDLDPAQPVAISAPQPSTDSPARAAYQPTDEAATDAEPRRDDAEPPSAAAAQDAGRESRP.

Substrate is bound by residues 49 to 52 (TCNR), Ser-109, 114 to 116 (EHQ), and Gln-120. Cys-50 (nucleophile) is an active-site residue. 189-194 (GAGAMA) is an NADP(+) binding site. The segment at 422–473 (VAISAPQPSTDSPARAAYQPTDEAATDAEPRRDDAEPPSAAAAQDAGRESRP) is disordered.

The protein belongs to the glutamyl-tRNA reductase family. Homodimer.

The enzyme catalyses (S)-4-amino-5-oxopentanoate + tRNA(Glu) + NADP(+) = L-glutamyl-tRNA(Glu) + NADPH + H(+). Its pathway is porphyrin-containing compound metabolism; protoporphyrin-IX biosynthesis; 5-aminolevulinate from L-glutamyl-tRNA(Glu): step 1/2. Catalyzes the NADPH-dependent reduction of glutamyl-tRNA(Glu) to glutamate 1-semialdehyde (GSA). This chain is Glutamyl-tRNA reductase, found in Acidothermus cellulolyticus (strain ATCC 43068 / DSM 8971 / 11B).